Here is an 883-residue protein sequence, read N- to C-terminus: Phosphoenolpyruvate carboxylase (883 aa).

Active-site residues include H141 and K547.

The protein belongs to the PEPCase type 1 family. The cofactor is Mg(2+).

It carries out the reaction oxaloacetate + phosphate = phosphoenolpyruvate + hydrogencarbonate. In terms of biological role, forms oxaloacetate, a four-carbon dicarboxylic acid source for the tricarboxylic acid cycle. This is Phosphoenolpyruvate carboxylase from Chromohalobacter salexigens (strain ATCC BAA-138 / DSM 3043 / CIP 106854 / NCIMB 13768 / 1H11).